The sequence spans 357 residues: Heat-inducible transcription repressor HrcA (357 aa).

It belongs to the HrcA family.

In terms of biological role, negative regulator of class I heat shock genes (grpE-dnaK-dnaJ and groELS operons). Prevents heat-shock induction of these operons. The polypeptide is Heat-inducible transcription repressor HrcA (Chlorobium phaeovibrioides (strain DSM 265 / 1930) (Prosthecochloris vibrioformis (strain DSM 265))).